A 285-amino-acid chain; its full sequence is ATP synthase gamma chain (285 aa).

The protein belongs to the ATPase gamma chain family. F-type ATPases have 2 components, CF(1) - the catalytic core - and CF(0) - the membrane proton channel. CF(1) has five subunits: alpha(3), beta(3), gamma(1), delta(1), epsilon(1). CF(0) has three main subunits: a, b and c.

The protein resides in the cell membrane. In terms of biological role, produces ATP from ADP in the presence of a proton gradient across the membrane. The gamma chain is believed to be important in regulating ATPase activity and the flow of protons through the CF(0) complex. The protein is ATP synthase gamma chain of Dehalococcoides mccartyi (strain CBDB1).